The sequence spans 494 residues: MKLFELSVKELRRLLVQKEVSPLEVVENLLCRIAEVDPKIFAYIYLNHERALEASKKADISLPLGGVPVAIKDNINVLGEPCRCASRILEGYLAPYDSTVIEKLKKAGAILLGRTNMDEFAMGSSTENSSVGITRNPWNTERVPGGSSGGSAAAVAAHEAFCALGSDTGGSIRQPAAFCGCVGLKPTYGRVSRYGLTAFASSLDQIGPITKTVEDAALLLEVISGFDPFDNTSEKLPVPRFSELLENRPLKDFVLGIPKEYFIEGIDGEVRQALSQVIGHYEKLGVKIEEVSLPHTPYAVATYYILATAEASANLARFDGIRYGKRAKNYNDLIDYYGKTRDEGFGSEVKRRILLGTYVLSSGYYDAYYLRALKVKEKIKQDFSLAFQKCQALLTPTSPFCAFRIGEKTSDPLQMYLADIFTIAVNLAGICALSIPCGRSTEGLPIGFQLIGPAWKEETILALGYIYQKTTGWVPPLPPLGGPTGGGGADGLPL.

Active-site charge relay system residues include Lys-72 and Ser-147. Ser-171 functions as the Acyl-ester intermediate in the catalytic mechanism.

It belongs to the amidase family. GatA subfamily. In terms of assembly, heterotrimer of A, B and C subunits.

The catalysed reaction is L-glutamyl-tRNA(Gln) + L-glutamine + ATP + H2O = L-glutaminyl-tRNA(Gln) + L-glutamate + ADP + phosphate + H(+). In terms of biological role, allows the formation of correctly charged Gln-tRNA(Gln) through the transamidation of misacylated Glu-tRNA(Gln) in organisms which lack glutaminyl-tRNA synthetase. The reaction takes place in the presence of glutamine and ATP through an activated gamma-phospho-Glu-tRNA(Gln). This is Glutamyl-tRNA(Gln) amidotransferase subunit A from Methylacidiphilum infernorum (isolate V4) (Methylokorus infernorum (strain V4)).